Here is a 430-residue protein sequence, read N- to C-terminus: Lipoyl synthase, chloroplastic (430 aa).

Residues 1-16 (MRSLATLHQSPASCSR) show a composition bias toward polar residues. Residues 1–40 (MRSLATLHQSPASCSRSAPVAPCPARRANSSRRVARQGPR) constitute a chloroplast transit peptide. 2 disordered regions span residues 1–55 (MRSL…SEDV) and 85–119 (HLRS…SLGA). Residues 91-119 (KSAAPVSPFAAPSPGSPSASSMLGPSLGA) are compositionally biased toward low complexity. Residues Cys-155, Cys-160, Cys-166, Cys-183, Cys-187, Cys-190, and Ser-397 each contribute to the [4Fe-4S] cluster site. Residues 166–386 (CWNGELATAT…KFGQEEIGFR (221 aa)) enclose the Radical SAM core domain.

This sequence belongs to the radical SAM superfamily. Lipoyl synthase family. [4Fe-4S] cluster is required as a cofactor.

Its subcellular location is the plastid. It is found in the chloroplast. It catalyses the reaction [[Fe-S] cluster scaffold protein carrying a second [4Fe-4S](2+) cluster] + N(6)-octanoyl-L-lysyl-[protein] + 2 oxidized [2Fe-2S]-[ferredoxin] + 2 S-adenosyl-L-methionine + 4 H(+) = [[Fe-S] cluster scaffold protein] + N(6)-[(R)-dihydrolipoyl]-L-lysyl-[protein] + 4 Fe(3+) + 2 hydrogen sulfide + 2 5'-deoxyadenosine + 2 L-methionine + 2 reduced [2Fe-2S]-[ferredoxin]. Its pathway is protein modification; protein lipoylation via endogenous pathway; protein N(6)-(lipoyl)lysine from octanoyl-[acyl-carrier-protein]: step 2/2. Its function is as follows. Catalyzes the radical-mediated insertion of two sulfur atoms into the C-6 and C-8 positions of the octanoyl moiety bound to the lipoyl domains of lipoate-dependent enzymes, thereby converting the octanoylated domains into lipoylated derivatives. This Chlamydomonas reinhardtii (Chlamydomonas smithii) protein is Lipoyl synthase, chloroplastic.